We begin with the raw amino-acid sequence, 327 residues long: Ferrochelatase 2 (327 aa).

Fe cation-binding residues include H201 and E282.

It belongs to the ferrochelatase family.

The protein resides in the cytoplasm. The enzyme catalyses heme b + 2 H(+) = protoporphyrin IX + Fe(2+). It functions in the pathway porphyrin-containing compound metabolism; protoheme biosynthesis; protoheme from protoporphyrin-IX: step 1/1. In terms of biological role, catalyzes the ferrous insertion into protoporphyrin IX. The chain is Ferrochelatase 2 from Shewanella oneidensis (strain ATCC 700550 / JCM 31522 / CIP 106686 / LMG 19005 / NCIMB 14063 / MR-1).